The primary structure comprises 122 residues: Large ribosomal subunit protein uL24 (122 aa).

The protein belongs to the universal ribosomal protein uL24 family. In terms of assembly, part of the 50S ribosomal subunit.

One of two assembly initiator proteins, it binds directly to the 5'-end of the 23S rRNA, where it nucleates assembly of the 50S subunit. Functionally, one of the proteins that surrounds the polypeptide exit tunnel on the outside of the subunit. This Renibacterium salmoninarum (strain ATCC 33209 / DSM 20767 / JCM 11484 / NBRC 15589 / NCIMB 2235) protein is Large ribosomal subunit protein uL24.